The chain runs to 425 residues: 3-deoxy-D-manno-octulosonic acid transferase (425 aa).

A helical; Signal-anchor membrane pass occupies residues 3–23 (ELLYTALLYLIQPLIWIRLWV). The active-site Proton acceptor is the E60. Residues 268–269 (PR), 309–311 (MGE), and 335–338 (NPLE) each bind CMP.

Belongs to the glycosyltransferase group 1 family. Glycosyltransferase 30 subfamily.

It is found in the cell inner membrane. The catalysed reaction is lipid IVA (E. coli) + CMP-3-deoxy-beta-D-manno-octulosonate = alpha-Kdo-(2-&gt;6)-lipid IVA (E. coli) + CMP + H(+). The enzyme catalyses alpha-Kdo-(2-&gt;6)-lipid IVA (E. coli) + CMP-3-deoxy-beta-D-manno-octulosonate = alpha-Kdo-(2-&gt;4)-alpha-Kdo-(2-&gt;6)-lipid IVA (E. coli) + CMP + H(+). It functions in the pathway glycolipid biosynthesis; KDO(2)-lipid A biosynthesis; KDO(2)-lipid A from CMP-3-deoxy-D-manno-octulosonate and lipid IV(A): step 1/4. Its pathway is glycolipid biosynthesis; KDO(2)-lipid A biosynthesis; KDO(2)-lipid A from CMP-3-deoxy-D-manno-octulosonate and lipid IV(A): step 2/4. It participates in bacterial outer membrane biogenesis; LPS core biosynthesis. In terms of biological role, involved in lipopolysaccharide (LPS) biosynthesis. Catalyzes the transfer of two 3-deoxy-D-manno-octulosonate (Kdo) residues from CMP-Kdo to lipid IV(A), the tetraacyldisaccharide-1,4'-bisphosphate precursor of lipid A. The chain is 3-deoxy-D-manno-octulosonic acid transferase (waaA) from Escherichia coli O157:H7.